Reading from the N-terminus, the 399-residue chain is MELLNIKNLDLAGKKVFIRCDFNVPMDEFGNISDDRRIRSAVSTINYCLDQECAVILASHLGRPEGEVVDKYSLIPIARRIQHLLRREVDLASDVVGEDALKRASELKSGQVLMLENLRYEAGETKNDKELSKKLASMADFYINDAFGVSHRAHASVEGITHFFDDKHKAAGFLLQKEIDFLGKIIQNPVRPFAAIVGGSKVSGKLEALINLLPRVDKVLIGGGMAFTFLKKLGYDIGASLVEDDLLEEAGRIMDEAKKLGVKFYLPVDVVVADKFSEDAISKIVSYQEIPPLWMGLDIGPATVRLYGEVLSDVQTVLWNGPMGVYEMDKFARGSNKIAHFVADSYATTIVGGGDTADLVQRIGVDDEMTFISTGGGASLELLEGKILPGVASLIRKKG.

Residues 21–23, Arg-37, 60–63, Arg-119, and Arg-152 contribute to the substrate site; these read DFN and HLGR. ATP contacts are provided by residues Lys-205, Gly-296, Glu-327, and 353-356; that span reads GGDT.

It belongs to the phosphoglycerate kinase family. Monomer.

Its subcellular location is the cytoplasm. The catalysed reaction is (2R)-3-phosphoglycerate + ATP = (2R)-3-phospho-glyceroyl phosphate + ADP. Its pathway is carbohydrate degradation; glycolysis; pyruvate from D-glyceraldehyde 3-phosphate: step 2/5. The polypeptide is Phosphoglycerate kinase (Sulfurimonas denitrificans (strain ATCC 33889 / DSM 1251) (Thiomicrospira denitrificans (strain ATCC 33889 / DSM 1251))).